Consider the following 426-residue polypeptide: Serine--tRNA ligase (426 aa).

Residue 231–233 (TAE) coordinates L-serine. An ATP-binding site is contributed by 262-264 (RSE). An L-serine-binding site is contributed by E285. ATP is bound at residue 349–352 (EISS). S385 contributes to the L-serine binding site.

Belongs to the class-II aminoacyl-tRNA synthetase family. Type-1 seryl-tRNA synthetase subfamily. Homodimer. The tRNA molecule binds across the dimer.

The protein resides in the cytoplasm. It carries out the reaction tRNA(Ser) + L-serine + ATP = L-seryl-tRNA(Ser) + AMP + diphosphate + H(+). The enzyme catalyses tRNA(Sec) + L-serine + ATP = L-seryl-tRNA(Sec) + AMP + diphosphate + H(+). It functions in the pathway aminoacyl-tRNA biosynthesis; selenocysteinyl-tRNA(Sec) biosynthesis; L-seryl-tRNA(Sec) from L-serine and tRNA(Sec): step 1/1. Its function is as follows. Catalyzes the attachment of serine to tRNA(Ser). Is also able to aminoacylate tRNA(Sec) with serine, to form the misacylated tRNA L-seryl-tRNA(Sec), which will be further converted into selenocysteinyl-tRNA(Sec). The protein is Serine--tRNA ligase of Brevibacillus brevis (strain 47 / JCM 6285 / NBRC 100599).